The sequence spans 680 residues: Lipase 1 (680 aa).

A signal peptide spans 1-34 (MKSQNKYSIRKFSVGASSILIATLLFLSGGQAQA). A propeptide spanning residues 35-290 (AEKQVNMGNS…AKAKGDQTNK (256 aa)) is cleaved from the precursor. Disordered stretches follow at residues 39 to 58 (VNMG…GDQQ) and 82 to 260 (KNLH…KNGL). The span at 40 to 58 (NMGNSQEDTVTAQSIGDQQ) shows a compositional bias: polar residues. Residues 84-112 (LHNDKTISEENHRKTDDLNKDQLKDDKKS) are compositionally biased toward basic and acidic residues. Composition is skewed to polar residues over residues 162 to 193 (SQDL…SQRE) and 204 to 223 (QPQQ…FNNE). Residues 224-234 (QEVKPQKDEKT) are compositionally biased toward basic and acidic residues. A compositionally biased stretch (polar residues) spans 235–246 (LSVSDLKNNQKS). The Nucleophile role is filled by serine 408. Catalysis depends on aspartate 600, which acts as the Charge relay system. Aspartate 638 is a binding site for Ca(2+). Histidine 639 (charge relay system) is an active-site residue. 3 residues coordinate Ca(2+): aspartate 641, aspartate 646, and aspartate 649.

This sequence belongs to the AB hydrolase superfamily. Lipase family.

The protein resides in the secreted. It carries out the reaction a triacylglycerol + H2O = a diacylglycerol + a fatty acid + H(+). This chain is Lipase 1 (lip1), found in Staphylococcus aureus (strain MRSA252).